The primary structure comprises 145 residues: Large ribosomal subunit protein uL13 (145 aa).

It belongs to the universal ribosomal protein uL13 family. In terms of assembly, part of the 50S ribosomal subunit.

In terms of biological role, this protein is one of the early assembly proteins of the 50S ribosomal subunit, although it is not seen to bind rRNA by itself. It is important during the early stages of 50S assembly. The polypeptide is Large ribosomal subunit protein uL13 (Staphylococcus aureus (strain Mu3 / ATCC 700698)).